Reading from the N-terminus, the 388-residue chain is Succinate--CoA ligase [ADP-forming] subunit beta (388 aa).

The region spanning 9–244 (KEIFRSMGVA…LEEEDPKEIE (236 aa)) is the ATP-grasp domain. Residues lysine 46, 53–55 (GRG), glutamate 99, cysteine 102, and glutamate 107 each bind ATP. Asparagine 199 and aspartate 213 together coordinate Mg(2+). Residues asparagine 264 and 321-323 (GIM) each bind substrate.

This sequence belongs to the succinate/malate CoA ligase beta subunit family. Heterotetramer of two alpha and two beta subunits. Mg(2+) serves as cofactor.

The catalysed reaction is succinate + ATP + CoA = succinyl-CoA + ADP + phosphate. It catalyses the reaction GTP + succinate + CoA = succinyl-CoA + GDP + phosphate. It functions in the pathway carbohydrate metabolism; tricarboxylic acid cycle; succinate from succinyl-CoA (ligase route): step 1/1. Functionally, succinyl-CoA synthetase functions in the citric acid cycle (TCA), coupling the hydrolysis of succinyl-CoA to the synthesis of either ATP or GTP and thus represents the only step of substrate-level phosphorylation in the TCA. The beta subunit provides nucleotide specificity of the enzyme and binds the substrate succinate, while the binding sites for coenzyme A and phosphate are found in the alpha subunit. This is Succinate--CoA ligase [ADP-forming] subunit beta from Staphylococcus aureus (strain Mu3 / ATCC 700698).